The primary structure comprises 324 residues: Protoheme IX farnesyltransferase (324 aa).

The next 9 membrane-spanning stretches (helical) occupy residues 31-51, 56-76, 105-125, 126-146, 153-173, 181-201, 214-234, 238-258, and 285-305; these read LILL…SGQV, FLTT…INCI, VFAA…ANLL, SACL…YWLK, IVIG…AVTG, VLFA…AMMI, PVVN…LLLL, LLLV…AIVL, and FSIL…LPWT.

The protein belongs to the UbiA prenyltransferase family. Protoheme IX farnesyltransferase subfamily.

The protein resides in the cell inner membrane. It carries out the reaction heme b + (2E,6E)-farnesyl diphosphate + H2O = Fe(II)-heme o + diphosphate. The protein operates within porphyrin-containing compound metabolism; heme O biosynthesis; heme O from protoheme: step 1/1. Converts heme B (protoheme IX) to heme O by substitution of the vinyl group on carbon 2 of heme B porphyrin ring with a hydroxyethyl farnesyl side group. This chain is Protoheme IX farnesyltransferase, found in Acaryochloris marina (strain MBIC 11017).